The following is a 346-amino-acid chain: Elongation factor Ts (346 aa).

The tract at residues 80–83 is involved in Mg(2+) ion dislocation from EF-Tu; it reads TDFV.

It belongs to the EF-Ts family.

It is found in the cytoplasm. Associates with the EF-Tu.GDP complex and induces the exchange of GDP to GTP. It remains bound to the aminoacyl-tRNA.EF-Tu.GTP complex up to the GTP hydrolysis stage on the ribosome. The protein is Elongation factor Ts of Streptococcus suis (strain 98HAH33).